The chain runs to 67 residues: Large ribosomal subunit protein bL35 (67 aa).

It belongs to the bacterial ribosomal protein bL35 family.

This Sphingopyxis alaskensis (strain DSM 13593 / LMG 18877 / RB2256) (Sphingomonas alaskensis) protein is Large ribosomal subunit protein bL35.